A 475-amino-acid polypeptide reads, in one-letter code: Vitronectin (475 aa).

Positions 1–19 (MAPLRPIFTLALLLWVVLA) are cleaved as a signal peptide. An SMB domain is found at 20–63 (DQESCKDRCTEGFNANRKCQCDELCSYYQSCCADYAAECKPQVT). Cystine bridges form between Cys24–Cys28, Cys24–Cys40, Cys28–Cys58, Cys38–Cys40, Cys38–Cys51, Cys44–Cys50, and Cys51–Cys58. Residues 64–66 (RGD) carry the Cell attachment site motif. Thr69 bears the Phosphothreonine mark. Sulfotyrosine is present on residues Tyr75, Tyr78, and Tyr80. Asn87 carries N-linked (GlcNAc...) asparagine glycosylation. Residues 87–123 (NASVHAQPESPTVGQEPTLSPDLQTEGGAEPTHEVPL) are disordered. Polar residues predominate over residues 95–109 (ESPTVGQEPTLSPDL). 3 Hemopexin repeats span residues 158–202 (GKPF…VWGI), 203–250 (EGPI…FSGI), and 251–305 (PDNV…FEHF). 2 N-linked (GlcNAc...) asparagine glycosylation sites follow: Asn169 and Asn242. A sulfotyrosine mark is found at Tyr279 and Tyr282. The residue at position 312 (Ser312) is a Phosphoserine. Residues 359 to 391 (LTPSPSAKKQKSRRRSRKRYRSRYGRGRSQNSR) are disordered. Basic residues predominate over residues 366–384 (KKQKSRRRSRKRYRSRYGR). The tract at residues 366 to 392 (KKQKSRRRSRKRYRSRYGRGRSQNSRR) is glycosaminoglycan binding region. Residue Ser394 is modified to Phosphoserine. A Hemopexin 4 repeat occupies 419-469 (TSWLKPATSEPIQSVYFFSGDKYYRVNLRTQRVDTVNPPYPRSIAQYWLGC).

In terms of assembly, interacts with SERPINE1/PAI1 and C1QBP. Monomer. In terms of processing, sulfated on tyrosine residues. Post-translationally, N- and O-glycosylated. It has been suggested that the active SMB domain may be permitted considerable disulfide bond heterogeneity or variability, thus two alternate disulfide patterns based on 3D structures are described with 1 disulfide bond conserved in both. As to expression, plasma.

The protein localises to the secreted. The protein resides in the extracellular space. Its function is as follows. Vitronectin is a cell adhesion and spreading factor found in serum and tissues. Vitronectin interact with glycosaminoglycans and proteoglycans. Is recognized by certain members of the integrin family and serves as a cell-to-substrate adhesion molecule. Inhibitor of the membrane-damaging effect of the terminal cytolytic complement pathway. The chain is Vitronectin (VTN) from Oryctolagus cuniculus (Rabbit).